The chain runs to 467 residues: Flagellar hook-associated protein 2 (467 aa).

Residues 411-439 (VNATLKSLTKQYLSVSNSIDETVARYKAQ) are a coiled coil.

This sequence belongs to the FliD family. In terms of assembly, homopentamer.

The protein resides in the secreted. It is found in the bacterial flagellum. Required for the morphogenesis and for the elongation of the flagellar filament by facilitating polymerization of the flagellin monomers at the tip of growing filament. Forms a capping structure, which prevents flagellin subunits (transported through the central channel of the flagellum) from leaking out without polymerization at the distal end. The chain is Flagellar hook-associated protein 2 (fliD) from Salmonella typhimurium (strain LT2 / SGSC1412 / ATCC 700720).